A 164-amino-acid chain; its full sequence is Ribosome-binding factor A (164 aa).

Belongs to the RbfA family. Monomer. Binds 30S ribosomal subunits, but not 50S ribosomal subunits or 70S ribosomes.

Its subcellular location is the cytoplasm. In terms of biological role, one of several proteins that assist in the late maturation steps of the functional core of the 30S ribosomal subunit. Associates with free 30S ribosomal subunits (but not with 30S subunits that are part of 70S ribosomes or polysomes). Required for efficient processing of 16S rRNA. May interact with the 5'-terminal helix region of 16S rRNA. This is Ribosome-binding factor A from Caulobacter sp. (strain K31).